The chain runs to 359 residues: DNA-directed RNA polymerase RPB3-11 homolog (359 aa).

This sequence in the N-terminal section; belongs to the archaeal RpoD/eukaryotic RPB3 RNA polymerase subunit family. It in the C-terminal section; belongs to the archaeal RpoL/eukaryotic RPB11/RPC19 RNA polymerase subunit family. Part of the viral DNA-directed RNA polymerase that consists of 8 polII-like subunits (RPB1, RPB2, RPB3, RPB5, RPB6, RPB7, RPB9, RPB10), a capping enzyme and a termination factor.

Its subcellular location is the host cytoplasm. The protein localises to the virion. Component of the DNA-directed RNA polymerase (RNAP) that catalyzes the transcription in the cytoplasm of viral DNA into RNA using the four ribonucleoside triphosphates as substrates. The polypeptide is DNA-directed RNA polymerase RPB3-11 homolog (Ornithodoros (relapsing fever ticks)).